A 549-amino-acid polypeptide reads, in one-letter code: Polynucleotide 5'-hydroxyl-kinase nol-9 (549 aa).

ATP is bound at residue 190–197; sequence GHKGAGKS.

Belongs to the Clp1 family. NOL9/GRC3 subfamily.

It is found in the nucleus. Its subcellular location is the nucleolus. Functionally, polynucleotide 5'-kinase involved in rRNA processing. The chain is Polynucleotide 5'-hydroxyl-kinase nol-9 (nol-9) from Caenorhabditis elegans.